The following is a 131-amino-acid chain: Histone H2A.2 (131 aa).

The disordered stretch occupies residues 1–22 (MSGGKGKAGSSEKASTSRSAKA). Serine 2 is subject to N-acetylserine. N6-acetyllysine occurs at positions 5 and 7. Residue glutamine 105 is modified to N5-methylglutamine. A Phosphoserine modification is found at serine 128. Residues 128-129 (SQ) carry the [ST]-Q motif motif.

This sequence belongs to the histone H2A family. The nucleosome is a histone octamer containing two molecules each of H2A, H2B, H3 and H4 assembled in one H3-H4 heterotetramer and two H2A-H2B heterodimers. The octamer wraps approximately 147 bp of DNA. In terms of processing, phosphorylated to form H2AS128ph (gamma-H2A) in response to DNA double-strand breaks (DSBs) generated by exogenous genotoxic agents and by stalled replication forks. Phosphorylation is dependent on the DNA damage checkpoint kinases MEC1/ATR and TEL1/ATM, spreads on either side of a detected DSB site and may mark the surrounding chromatin for recruitment of proteins required for DNA damage signaling and repair. Gamma-H2A is removed from the DNA prior to the strand invasion-primer extension step of the repair process and subsequently dephosphorylated. Dephosphorylation is necessary for efficient recovery from the DNA damage checkpoint. Post-translationally, acetylated by ESA1 to form H2AK4ac and H2AK7ac.

It localises to the nucleus. The protein resides in the chromosome. Core component of nucleosome which plays a central role in DNA double strand break (DSB) repair. Nucleosomes wrap and compact DNA into chromatin, limiting DNA accessibility to the cellular machineries which require DNA as a template. Histones thereby play a central role in transcription regulation, DNA repair, DNA replication and chromosomal stability. DNA accessibility is regulated via a complex set of post-translational modifications of histones, also called histone code, and nucleosome remodeling. The chain is Histone H2A.2 (HTA2) from Debaryomyces hansenii (strain ATCC 36239 / CBS 767 / BCRC 21394 / JCM 1990 / NBRC 0083 / IGC 2968) (Yeast).